We begin with the raw amino-acid sequence, 834 residues long: Periplasmic nitrate reductase (834 aa).

A signal peptide (tat-type signal) is located at residues 1-29; sequence MNLTRREFAKANAAAIAAAAAGLPILVRA. Residues 41–97 form the 4Fe-4S Mo/W bis-MGD-type domain; sequence LDWNKAPCRFCGTGCSVMVATRDGQVVATHGDIKAEVNRGINCVKGYFLSKIMYGSD. Cysteine 48, cysteine 51, cysteine 55, and cysteine 83 together coordinate [4Fe-4S] cluster. Residues lysine 85, glutamine 152, asparagine 177, cysteine 181, 214-221, 245-249, 264-266, methionine 375, glutamine 379, asparagine 485, 511-512, lysine 534, aspartate 561, and 721-730 contribute to the Mo-bis(molybdopterin guanine dinucleotide) site; these read WGSNMAEM, STFEH, QTD, SD, and TGRVLEHWHT. Substrate is bound at residue phenylalanine 797. Residues asparagine 805 and lysine 822 each contribute to the Mo-bis(molybdopterin guanine dinucleotide) site.

This sequence belongs to the prokaryotic molybdopterin-containing oxidoreductase family. NasA/NapA/NarB subfamily. As to quaternary structure, component of the periplasmic nitrate reductase NapAB complex composed of NapA and NapB. It depends on [4Fe-4S] cluster as a cofactor. Mo-bis(molybdopterin guanine dinucleotide) is required as a cofactor. In terms of processing, predicted to be exported by the Tat system. The position of the signal peptide cleavage has not been experimentally proven.

It is found in the periplasm. It carries out the reaction 2 Fe(II)-[cytochrome] + nitrate + 2 H(+) = 2 Fe(III)-[cytochrome] + nitrite + H2O. In terms of biological role, catalytic subunit of the periplasmic nitrate reductase complex NapAB. Receives electrons from NapB and catalyzes the reduction of nitrate to nitrite. In Pseudomonas paraeruginosa (strain DSM 24068 / PA7) (Pseudomonas aeruginosa (strain PA7)), this protein is Periplasmic nitrate reductase.